A 63-amino-acid polypeptide reads, in one-letter code: Hypoxia-inducible lipid droplet-associated protein (63 aa).

The tract at residues 1-37 (MKHVLNLYLLGVVLTLLSIFVRVMESLEGLLESPSPG) is required for targeting to lipid droplets. A helical transmembrane segment spans residues 7–23 (LYLLGVVLTLLSIFVRV). The segment at 31-63 (LESPSPGTSWTTRSQLANTEPTKGLPDHPSRSM) is disordered. Positions 35-51 (SPGTSWTTRSQLANTEP) are enriched in polar residues. Ser-44 carries the phosphoserine modification.

In terms of tissue distribution, highly expressed in renal cell carcinoma cells but barely detectable in adjacent normal kidney tissue. Detected in some cervical and endometrial cancers. Expression also detected in fetal kidney with little or no expression observed in normal adult heart, liver, lung, pancreas, prostate or spinal cord (at protein level).

The protein localises to the lipid droplet. The protein resides in the secreted. It is found in the membrane. In terms of biological role, increases intracellular lipid accumulation. Stimulates expression of cytokines including IL6, MIF and VEGFA. Enhances cell growth and proliferation. The sequence is that of Hypoxia-inducible lipid droplet-associated protein (HILPDA) from Homo sapiens (Human).